Here is a 144-residue protein sequence, read N- to C-terminus: Large ribosomal subunit protein uL24 (144 aa).

A disordered region spans residues 102-144 (NIVVEKPEPEPEPRKEETAEAQEAKEEAVAEEKTEVDDNDKQN). A compositionally biased stretch (basic and acidic residues) spans 103-134 (IVVEKPEPEPEPRKEETAEAQEAKEEAVAEEK). Positions 135–144 (TEVDDNDKQN) are enriched in acidic residues.

This sequence belongs to the universal ribosomal protein uL24 family. Part of the 50S ribosomal subunit.

One of two assembly initiator proteins, it binds directly to the 5'-end of the 23S rRNA, where it nucleates assembly of the 50S subunit. Functionally, located at the polypeptide exit tunnel on the outside of the subunit. This chain is Large ribosomal subunit protein uL24 (rpl24), found in Thermoplasma acidophilum (strain ATCC 25905 / DSM 1728 / JCM 9062 / NBRC 15155 / AMRC-C165).